The sequence spans 636 residues: Translation factor GUF1, mitochondrial (636 aa).

The tr-type G domain maps to 35 to 218 (SNYRNFSIVA…AIIRDIPGPR (184 aa)). GTP contacts are provided by residues 44-51 (AHVDHGKS), 111-115 (DTPGH), and 165-168 (NKID).

This sequence belongs to the TRAFAC class translation factor GTPase superfamily. Classic translation factor GTPase family. LepA subfamily.

It is found in the mitochondrion inner membrane. The enzyme catalyses GTP + H2O = GDP + phosphate + H(+). In terms of biological role, promotes mitochondrial protein synthesis. May act as a fidelity factor of the translation reaction, by catalyzing a one-codon backward translocation of tRNAs on improperly translocated ribosomes. Binds to mitochondrial ribosomes in a GTP-dependent manner. The sequence is that of Translation factor GUF1, mitochondrial from Debaryomyces hansenii (strain ATCC 36239 / CBS 767 / BCRC 21394 / JCM 1990 / NBRC 0083 / IGC 2968) (Yeast).